A 173-amino-acid polypeptide reads, in one-letter code: ADP-ribose 1''-phosphate phosphatase (173 aa).

One can recognise a Macro domain in the interval 1–173 (MIRYIKGDLL…YDVEFNVYVI (173 aa)). Residues 7–9 (GDL), 26–28 (ACN), 33–38 (WGGGIA), and 145–151 (INAGIFA) contribute to the substrate site.

It belongs to the POA1 family.

It carries out the reaction ADP-alpha-D-ribose 1''-phosphate + H2O = ADP-D-ribose + phosphate. Functionally, highly specific phosphatase involved in the metabolism of ADP-ribose 1''-phosphate (Appr1p) which is produced as a consequence of tRNA splicing. This Scheffersomyces stipitis (strain ATCC 58785 / CBS 6054 / NBRC 10063 / NRRL Y-11545) (Yeast) protein is ADP-ribose 1''-phosphate phosphatase (POA1).